A 478-amino-acid chain; its full sequence is H(+)/Cl(-) exchange transporter ClcA (478 aa).

Topologically, residues 1 to 32 are cytoplasmic; the sequence is MTHSTQQLSPEGVAEGKRGRLIRELVNRDKTP. The helical transmembrane segment at 33-69 threads the bilayer; that stretch reads LIILIMAAVVGVVTGLLGVAFDRGVDWVQQQRLLALA. The Periplasmic portion of the chain corresponds to 70-76; it reads NVADYAL. A helical transmembrane segment spans residues 77-100; the sequence is LVWPLAFIMSALLAMMGYFLVSRF. Positions 106-110 match the Selectivity filter part_1 motif; sequence GSGIP. Serine 107 lines the chloride pocket. Residues 109–116 constitute an intramembrane region (helical); that stretch reads IPEIEGAM. Residues 117–123 lie on the Cytoplasmic side of the membrane; that stretch reads EEMRPVR. 2 helical membrane passes run 124–141 and 148–166; these read WWRV…TLGA and EGPM…VDIF. The Selectivity filter part_2 motif lies at 146-150; that stretch reads GREGP. At 167-176 the chain is on the cytoplasmic side; sequence RLRSPEARHS. Intramembrane regions (helical) lie at residues 177–189 and 193–201; these read LLAT…LSAA and PLAGILFVI. Over 202–214 the chain is Cytoplasmic; that stretch reads EEMRSQFRYSLVS. A helical membrane pass occupies residues 215 to 232; it reads IKAVFIGVITSTIVYRYF. Residues 233-252 are Periplasmic-facing; it reads NGERAIIEVGKLSDAPLNTL. Residues 253–281 traverse the membrane as a helical segment; the sequence is WLYLLLGIIFGAVGVIFNALIFRTQDMFV. Residues 282-287 lie on the Cytoplasmic side of the membrane; the sequence is RFHGGD. A helical membrane pass occupies residues 288–309; the sequence is WRKLVLIGGLLGGMCGLLALLH. Topologically, residues 310-329 are periplasmic; the sequence is GNAVGGGFALIPIAAAGNFS. 2 consecutive transmembrane segments (helical) span residues 330 to 349 and 355 to 376; these read IGML…LCFG and GIFA…LSCA. A Selectivity filter part_3 motif is present at residues 355-359; it reads GIFAP. Chloride is bound by residues isoleucine 356 and phenylalanine 357. The Periplasmic segment spans residues 377–386; it reads HFFPQYGIEA. The helical intramembrane region spans 387–401; it reads GTFAIAGMGALFAAS. The segment at residues 402 to 404 is an intramembrane region (note=Loop between two helices); sequence VRA. An intramembrane region (helical) is located at residues 405 to 416; the sequence is PLTGIVLVLEMT. Residues 417–421 constitute an intramembrane region (note=Loop between two helices); sequence DNYQL. The helical transmembrane segment at 422–438 threads the bilayer; sequence ILPMIVTCLGATLIAQF. Residues 439-478 are Cytoplasmic-facing; sequence MGGKPLYSAILARTLAKQEQARATVIAQEPAVENTPQIGK. Position 445 (tyrosine 445) interacts with chloride.

The protein belongs to the chloride channel (TC 2.A.49) family. ClcA subfamily. As to quaternary structure, homodimer.

The protein resides in the cell inner membrane. The enzyme catalyses 2 chloride(in) + H(+)(out) = 2 chloride(out) + H(+)(in). Its function is as follows. Proton-coupled chloride transporter. Functions as antiport system and exchanges two chloride ions for 1 proton. Probably acts as an electrical shunt for an outwardly-directed proton pump that is linked to amino acid decarboxylation, as part of the extreme acid resistance (XAR) response. The polypeptide is H(+)/Cl(-) exchange transporter ClcA (Yersinia pestis bv. Antiqua (strain Antiqua)).